Reading from the N-terminus, the 405-residue chain is Deoxyguanosinetriphosphate triphosphohydrolase-like protein (405 aa).

The HD domain maps to 75–219 (RLTHTIEVAQ…AAIADDIAYN (145 aa)).

The protein belongs to the dGTPase family. Type 2 subfamily.

The chain is Deoxyguanosinetriphosphate triphosphohydrolase-like protein from Agrobacterium fabrum (strain C58 / ATCC 33970) (Agrobacterium tumefaciens (strain C58)).